The sequence spans 308 residues: CMP-N-acetylneuraminate:beta-galactoside alpha-2,3-sialyltransferase (308 aa).

Aspartate 201 acts as the Proton acceptor in catalysis. CMP-N-acetyl-beta-neuraminate is bound by residues 221 to 225 (LPHPR), 242 to 243 (FE), and 262 to 263 (SS). Histidine 223 serves as the catalytic Proton donor.

Belongs to the glycosyltransferase 52 family. Divalent metal cations are not required for the alpha-2,3-sialyltransferase activity. is required as a cofactor.

Functionally, catalyzes the transfer of sialic acid from the substrate CMP-N-acetylneuraminate to lactosyl lipids as preferred acceptor substrates in vitro, forming alpha-2,3-linked sialosides. Beta-1,4-linked galactosyl lipids are better substrates than beta-1,3-linked galactosyl lipids. The natural acceptor substrate may be cell surface oligosaccharides in lipooligosaccharide (LOS), whose sialylation has been demonstrated vital for the virulence of P.multocida. The protein is CMP-N-acetylneuraminate:beta-galactoside alpha-2,3-sialyltransferase (lst) of Pasteurella multocida (strain Pm70).